Consider the following 135-residue polypeptide: S-protein homolog 7 (135 aa).

The signal sequence occupies residues 1–20; sequence MNNLFVLVIIIVLSAGSNNG.

The protein belongs to the plant self-incompatibility (S1) protein family.

The protein resides in the secreted. In Arabidopsis thaliana (Mouse-ear cress), this protein is S-protein homolog 7.